A 338-amino-acid chain; its full sequence is UPF0104 membrane protein MTH_1261 (338 aa).

The next 8 membrane-spanning stretches (helical) occupy residues 6–26 (AILIVIGVVALAAMILIIGPG), 36–56 (DPVYVLMAVVLEFIILALFTL), 124–144 (LDTFPFIFLAVLTIIGIVLYF), 149–169 (WILAALIASVVIIVVAFFLAL), 231–251 (ISFLIWILEIIRVYLIFTAFG), 254–274 (ISLLVIAEVFILATLIGMIPL), 275–295 (LPGGLGAVDGIMIVFYSYAGV), and 310–330 (ISFWMISAMGVAAIPYFGSSV).

The protein belongs to the UPF0104 family.

The protein resides in the cell membrane. This chain is UPF0104 membrane protein MTH_1261, found in Methanothermobacter thermautotrophicus (strain ATCC 29096 / DSM 1053 / JCM 10044 / NBRC 100330 / Delta H) (Methanobacterium thermoautotrophicum).